A 766-amino-acid chain; its full sequence is Phosphoribosylformylglycinamidine synthase subunit PurL (766 aa).

Histidine 46 is a catalytic residue. ATP contacts are provided by tyrosine 49 and lysine 88. Glutamate 90 is a binding site for Mg(2+). Residues 91–94 (SHNH) and arginine 113 contribute to the substrate site. Residue histidine 92 is the Proton acceptor of the active site. Aspartate 114 contributes to the Mg(2+) binding site. Glutamine 237 lines the substrate pocket. Mg(2+) is bound at residue aspartate 265. 309 to 311 (ESQ) contacts substrate. Aspartate 520 and glycine 557 together coordinate ATP. A Mg(2+)-binding site is contributed by asparagine 558. Serine 560 contributes to the substrate binding site.

This sequence belongs to the FGAMS family. Monomer. Part of the FGAM synthase complex composed of 1 PurL, 1 PurQ and 2 PurS subunits.

It localises to the cytoplasm. It catalyses the reaction N(2)-formyl-N(1)-(5-phospho-beta-D-ribosyl)glycinamide + L-glutamine + ATP + H2O = 2-formamido-N(1)-(5-O-phospho-beta-D-ribosyl)acetamidine + L-glutamate + ADP + phosphate + H(+). Its pathway is purine metabolism; IMP biosynthesis via de novo pathway; 5-amino-1-(5-phospho-D-ribosyl)imidazole from N(2)-formyl-N(1)-(5-phospho-D-ribosyl)glycinamide: step 1/2. In terms of biological role, part of the phosphoribosylformylglycinamidine synthase complex involved in the purines biosynthetic pathway. Catalyzes the ATP-dependent conversion of formylglycinamide ribonucleotide (FGAR) and glutamine to yield formylglycinamidine ribonucleotide (FGAM) and glutamate. The FGAM synthase complex is composed of three subunits. PurQ produces an ammonia molecule by converting glutamine to glutamate. PurL transfers the ammonia molecule to FGAR to form FGAM in an ATP-dependent manner. PurS interacts with PurQ and PurL and is thought to assist in the transfer of the ammonia molecule from PurQ to PurL. The sequence is that of Phosphoribosylformylglycinamidine synthase subunit PurL from Synechococcus sp. (strain JA-3-3Ab) (Cyanobacteria bacterium Yellowstone A-Prime).